Reading from the N-terminus, the 398-residue chain is MTQSVCILGVTGSIGRSTLKILGQHPDKYSVFAVSAHSRISELVEICKQFRPKVVVVPEQKIAELKTLFAQQNISDIDVLAGQEGLVDIASHTDVDIVMAAIVGAAGLLPTLAAVKAGKRVLLANKEALVMSGEIMMQAARDHQALLLPVDSEHNAIFQSLPHNYLQADRTGQPQLGVSKILLTASGGPFLNHSLEQLTHVTPQQACKHPNWSMGQKISVDSATLMNKGLELIEACHLFSISEHFVTVVVHPQSIIHSMVQYVDGSTLAQMGNPDMCTPIAHALAWPERLQTNVPALDLFEYSQLNFQAPDTQKFPALNLARQAMRAGGLAPTILNAANEIAVEAFLMERIGFTSIPQVVEHTLEKLENAAAESIECILDKDKVARSVAQQYISSIGG.

Positions 11, 12, 13, 14, and 125 each coordinate NADPH. Lys126 lines the 1-deoxy-D-xylulose 5-phosphate pocket. Residue Glu127 participates in NADPH binding. A Mn(2+)-binding site is contributed by Asp151. 1-deoxy-D-xylulose 5-phosphate is bound by residues Ser152, Glu153, Ser186, and His209. Mn(2+) is bound at residue Glu153. Gly215 contacts NADPH. Residues Ser222, Asn227, Lys228, and Glu231 each contribute to the 1-deoxy-D-xylulose 5-phosphate site. Residue Glu231 coordinates Mn(2+).

It belongs to the DXR family. It depends on Mg(2+) as a cofactor. Requires Mn(2+) as cofactor.

It catalyses the reaction 2-C-methyl-D-erythritol 4-phosphate + NADP(+) = 1-deoxy-D-xylulose 5-phosphate + NADPH + H(+). It functions in the pathway isoprenoid biosynthesis; isopentenyl diphosphate biosynthesis via DXP pathway; isopentenyl diphosphate from 1-deoxy-D-xylulose 5-phosphate: step 1/6. Its function is as follows. Catalyzes the NADPH-dependent rearrangement and reduction of 1-deoxy-D-xylulose-5-phosphate (DXP) to 2-C-methyl-D-erythritol 4-phosphate (MEP). This chain is 1-deoxy-D-xylulose 5-phosphate reductoisomerase, found in Acinetobacter baumannii (strain ATCC 17978 / DSM 105126 / CIP 53.77 / LMG 1025 / NCDC KC755 / 5377).